A 252-amino-acid chain; its full sequence is Triosephosphate isomerase (252 aa).

9–11 (NWK) serves as a coordination point for substrate. The Electrophile role is filled by His96. Glu168 acts as the Proton acceptor in catalysis. Substrate-binding positions include Gly174, Ser214, and 235–236 (GG).

The protein belongs to the triosephosphate isomerase family. As to quaternary structure, homodimer.

The protein resides in the cytoplasm. It carries out the reaction D-glyceraldehyde 3-phosphate = dihydroxyacetone phosphate. Its pathway is carbohydrate biosynthesis; gluconeogenesis. The protein operates within carbohydrate degradation; glycolysis; D-glyceraldehyde 3-phosphate from glycerone phosphate: step 1/1. Involved in the gluconeogenesis. Catalyzes stereospecifically the conversion of dihydroxyacetone phosphate (DHAP) to D-glyceraldehyde-3-phosphate (G3P). The sequence is that of Triosephosphate isomerase from Chloroherpeton thalassium (strain ATCC 35110 / GB-78).